The following is a 228-amino-acid chain: Lipoprotein-releasing system ATP-binding protein LolD (228 aa).

The ABC transporter domain occupies 7-227; that stretch reads LQLSGIERHY…TIEDGKVVEL (221 aa). 43 to 50 serves as a coordination point for ATP; it reads APSGTGKS.

Belongs to the ABC transporter superfamily. Lipoprotein translocase (TC 3.A.1.125) family. The complex is composed of two ATP-binding proteins (LolD) and two transmembrane proteins (LolC and LolE).

Its subcellular location is the cell inner membrane. In terms of biological role, part of the ABC transporter complex LolCDE involved in the translocation of mature outer membrane-directed lipoproteins, from the inner membrane to the periplasmic chaperone, LolA. Responsible for the formation of the LolA-lipoprotein complex in an ATP-dependent manner. This is Lipoprotein-releasing system ATP-binding protein LolD from Rhizobium meliloti (strain 1021) (Ensifer meliloti).